The primary structure comprises 335 residues: DNA-directed RNA polymerase subunit alpha (335 aa).

Residues 1–233 (MTRTANEFLT…QQIAIFVDLQ (233 aa)) are alpha N-terminal domain (alpha-NTD). Residues 247-335 (VDPILLRPVD…MDDRFAYRSR (89 aa)) form an alpha C-terminal domain (alpha-CTD) region.

Belongs to the RNA polymerase alpha chain family. In terms of assembly, homodimer. The RNAP catalytic core consists of 2 alpha, 1 beta, 1 beta' and 1 omega subunit. When a sigma factor is associated with the core the holoenzyme is formed, which can initiate transcription.

It catalyses the reaction RNA(n) + a ribonucleoside 5'-triphosphate = RNA(n+1) + diphosphate. In terms of biological role, DNA-dependent RNA polymerase catalyzes the transcription of DNA into RNA using the four ribonucleoside triphosphates as substrates. This chain is DNA-directed RNA polymerase subunit alpha, found in Acinetobacter baylyi (strain ATCC 33305 / BD413 / ADP1).